The primary structure comprises 170 residues: Adenine phosphoribosyltransferase (170 aa).

The protein belongs to the purine/pyrimidine phosphoribosyltransferase family. In terms of assembly, homodimer.

It localises to the cytoplasm. The enzyme catalyses AMP + diphosphate = 5-phospho-alpha-D-ribose 1-diphosphate + adenine. Its pathway is purine metabolism; AMP biosynthesis via salvage pathway; AMP from adenine: step 1/1. In terms of biological role, catalyzes a salvage reaction resulting in the formation of AMP, that is energically less costly than de novo synthesis. This Geobacillus kaustophilus (strain HTA426) protein is Adenine phosphoribosyltransferase.